Here is a 541-residue protein sequence, read N- to C-terminus: Chaperonin GroEL (541 aa).

ATP-binding positions include 29-32 (TLGP), 86-90 (DGTTT), glycine 413, 477-479 (DAL), and aspartate 493.

Belongs to the chaperonin (HSP60) family. Forms a cylinder of 14 subunits composed of two heptameric rings stacked back-to-back. Interacts with the co-chaperonin GroES.

It localises to the cytoplasm. It carries out the reaction ATP + H2O + a folded polypeptide = ADP + phosphate + an unfolded polypeptide.. Its function is as follows. Together with its co-chaperonin GroES, plays an essential role in assisting protein folding. The GroEL-GroES system forms a nano-cage that allows encapsulation of the non-native substrate proteins and provides a physical environment optimized to promote and accelerate protein folding. This Clostridium botulinum (strain 657 / Type Ba4) protein is Chaperonin GroEL.